A 413-amino-acid chain; its full sequence is Alpha-1-antitrypsin-like protein GS55-LT (413 aa).

An N-terminal signal peptide occupies residues 1-21 (MPSSISWGLLLLAGLSCLATG). N-linked (GlcNAc...) asparagine glycans are attached at residues Asn65, Asn102, and Asn123. The interval 368-387 (RHTVKGPMALTLAPEVKFNR) is RCL.

The protein belongs to the serpin family.

The protein resides in the secreted. Its function is as follows. Inhibitor of serine proteases. In Ictidomys tridecemlineatus (Thirteen-lined ground squirrel), this protein is Alpha-1-antitrypsin-like protein GS55-LT.